The primary structure comprises 393 residues: Ig heavy chain C region (393 aa).

Ig-like domains lie at 63–157 (PTVI…RNIT), 168–260 (PVIK…ASIH), and 270–370 (PSVS…RTVN). N-linked (GlcNAc...) asparagine glycosylation is found at Asn119, Asn155, Asn200, Asn230, Asn329, Asn366, Asn370, and Asn380.

This Heterodontus francisci (Horn shark) protein is Ig heavy chain C region.